Reading from the N-terminus, the 401-residue chain is 8-amino-7-oxononanoate synthase (401 aa).

Residue R19 participates in substrate binding. A pyridoxal 5'-phosphate-binding site is contributed by G106–Y107. H131 is a binding site for substrate. Residues S176, H204, and T233 each contribute to the pyridoxal 5'-phosphate site. N6-(pyridoxal phosphate)lysine is present on K236. T350 contributes to the substrate binding site.

The protein belongs to the class-II pyridoxal-phosphate-dependent aminotransferase family. BioF subfamily. As to quaternary structure, homodimer. Pyridoxal 5'-phosphate serves as cofactor.

It catalyses the reaction 6-carboxyhexanoyl-[ACP] + L-alanine + H(+) = (8S)-8-amino-7-oxononanoate + holo-[ACP] + CO2. It participates in cofactor biosynthesis; biotin biosynthesis. Its function is as follows. Catalyzes the decarboxylative condensation of pimeloyl-[acyl-carrier protein] and L-alanine to produce 8-amino-7-oxononanoate (AON), [acyl-carrier protein], and carbon dioxide. This Pseudomonas aeruginosa (strain LESB58) protein is 8-amino-7-oxononanoate synthase.